A 598-amino-acid chain; its full sequence is Aspartate--tRNA(Asp/Asn) ligase (598 aa).

Glu177 is an L-aspartate binding site. The tract at residues Gln201–Lys204 is aspartate. Residue Arg223 participates in L-aspartate binding. ATP contacts are provided by residues Arg223 to Glu225 and Gln232. His456 serves as a coordination point for L-aspartate. Glu493 contributes to the ATP binding site. Arg500 is an L-aspartate binding site. Position 545–548 (Gly545–Arg548) interacts with ATP.

Belongs to the class-II aminoacyl-tRNA synthetase family. Type 1 subfamily. Homodimer.

It is found in the cytoplasm. It carries out the reaction tRNA(Asx) + L-aspartate + ATP = L-aspartyl-tRNA(Asx) + AMP + diphosphate. In terms of biological role, aspartyl-tRNA synthetase with relaxed tRNA specificity since it is able to aspartylate not only its cognate tRNA(Asp) but also tRNA(Asn). Reaction proceeds in two steps: L-aspartate is first activated by ATP to form Asp-AMP and then transferred to the acceptor end of tRNA(Asp/Asn). In Prochlorococcus marinus (strain MIT 9215), this protein is Aspartate--tRNA(Asp/Asn) ligase.